A 95-amino-acid chain; its full sequence is Mitochondrial import inner membrane translocase subunit Tim13 (95 aa).

Methionine 1 is modified (N-acetylmethionine). Phosphoserine is present on serine 7. The Twin CX3C motif motif lies at 46-69; the sequence is CFRKCIGKPGGSLDNSEQKCIAMC. 2 cysteine pairs are disulfide-bonded: cysteine 46–cysteine 69 and cysteine 50–cysteine 65. Residue lysine 53 is modified to N6-succinyllysine.

The protein belongs to the small Tim family. In terms of assembly, heterohexamer; composed of 3 copies of TIMM8 (TIMM8A or TIMM8B) and 3 copies of TIMM13, named soluble 70 kDa complex. Associates with the TIM22 complex, whose core is composed of TIMM22. As to expression, ubiquitous, with highest expression in heart, kidney, liver and skeletal muscle.

It is found in the mitochondrion inner membrane. Mitochondrial intermembrane chaperone that participates in the import and insertion of some multi-pass transmembrane proteins into the mitochondrial inner membrane. Also required for the transfer of beta-barrel precursors from the TOM complex to the sorting and assembly machinery (SAM complex) of the outer membrane. Acts as a chaperone-like protein that protects the hydrophobic precursors from aggregation and guide them through the mitochondrial intermembrane space. The TIMM8-TIMM13 complex mediates the import of proteins such as TIMM23, SLC25A12/ARALAR1 and SLC25A13/ARALAR2, while the predominant TIMM9-TIMM10 70 kDa complex mediates the import of much more proteins. The sequence is that of Mitochondrial import inner membrane translocase subunit Tim13 (TIMM13) from Homo sapiens (Human).